Consider the following 245-residue polypeptide: 1-(5-phosphoribosyl)-5-[(5-phosphoribosylamino)methylideneamino] imidazole-4-carboxamide isomerase (245 aa).

Catalysis depends on D10, which acts as the Proton acceptor. Residue D135 is the Proton donor of the active site.

This sequence belongs to the HisA/HisF family.

The protein resides in the cytoplasm. It catalyses the reaction 1-(5-phospho-beta-D-ribosyl)-5-[(5-phospho-beta-D-ribosylamino)methylideneamino]imidazole-4-carboxamide = 5-[(5-phospho-1-deoxy-D-ribulos-1-ylimino)methylamino]-1-(5-phospho-beta-D-ribosyl)imidazole-4-carboxamide. It participates in amino-acid biosynthesis; L-histidine biosynthesis; L-histidine from 5-phospho-alpha-D-ribose 1-diphosphate: step 4/9. This is 1-(5-phosphoribosyl)-5-[(5-phosphoribosylamino)methylideneamino] imidazole-4-carboxamide isomerase from Methanosarcina barkeri (strain Fusaro / DSM 804).